Consider the following 430-residue polypeptide: Serine/threonine transporter SstT (430 aa).

9 helical membrane passes run Ile-24 to Ile-44, Phe-47 to Val-67, Phe-82 to Leu-102, Ala-144 to Met-164, Val-186 to Val-206, Leu-223 to Phe-243, Ile-294 to Met-314, Leu-320 to Ala-340, and Phe-361 to Ile-381.

The protein belongs to the dicarboxylate/amino acid:cation symporter (DAACS) (TC 2.A.23) family.

It is found in the cell membrane. It catalyses the reaction L-serine(in) + Na(+)(in) = L-serine(out) + Na(+)(out). The enzyme catalyses L-threonine(in) + Na(+)(in) = L-threonine(out) + Na(+)(out). Functionally, involved in the import of serine and threonine into the cell, with the concomitant import of sodium (symport system). This is Serine/threonine transporter SstT from Bifidobacterium adolescentis (strain ATCC 15703 / DSM 20083 / NCTC 11814 / E194a).